Reading from the N-terminus, the 50-residue chain is Sperm protamine P1 (50 aa).

Disulfide bonds link Cys-7/Cys-15 and Cys-39/Cys-47.

It belongs to the protamine P1 family. As to quaternary structure, cross-linked by interchain disulfide bonds around the DNA-helix. Testis.

The protein resides in the nucleus. It localises to the chromosome. Functionally, protamines substitute for histones in the chromatin of sperm during the haploid phase of spermatogenesis. They compact sperm DNA into a highly condensed, stable and inactive complex. In Sus scrofa (Pig), this protein is Sperm protamine P1 (PRM1).